The following is a 591-amino-acid chain: Oligopeptide-binding protein OppA (591 aa).

This sequence belongs to the bacterial solute-binding protein 5 family. The complex is composed of an ATP-binding protein (OppD), two transmembrane proteins (OppB and OppC) and a solute-binding protein (OppA).

It is found in the periplasm. In terms of biological role, part of the ABC transporter complex OppABCD involved in the uptake of oligopeptides. Peptide-binding protein that shows broad specificity but a moderate preference for hydrophobic oligopeptides and those that are 6-16 amino acids long. This is Oligopeptide-binding protein OppA from Mycobacterium bovis (strain ATCC BAA-935 / AF2122/97).